We begin with the raw amino-acid sequence, 171 residues long: Shikimate kinase (171 aa).

14-19 (GAGKST) lines the ATP pocket. S18 is a Mg(2+) binding site. Residues D36, R60, and G82 each coordinate substrate. R120 is a binding site for ATP. A substrate-binding site is contributed by R139. Q156 lines the ATP pocket.

Belongs to the shikimate kinase family. Monomer. Requires Mg(2+) as cofactor.

The protein resides in the cytoplasm. The enzyme catalyses shikimate + ATP = 3-phosphoshikimate + ADP + H(+). Its pathway is metabolic intermediate biosynthesis; chorismate biosynthesis; chorismate from D-erythrose 4-phosphate and phosphoenolpyruvate: step 5/7. Its function is as follows. Catalyzes the specific phosphorylation of the 3-hydroxyl group of shikimic acid using ATP as a cosubstrate. The sequence is that of Shikimate kinase from Shewanella putrefaciens (strain CN-32 / ATCC BAA-453).